A 75-amino-acid chain; its full sequence is Protein Tlp homolog (75 aa).

The disordered stretch occupies residues 53–75 (REALDGMREEIKDEARDKKNGYM).

This sequence belongs to the Tlp family.

The sequence is that of Protein Tlp homolog from Clostridium botulinum (strain ATCC 19397 / Type A).